Reading from the N-terminus, the 501-residue chain is Cytochrome P450 4d2 (501 aa).

Heme is bound by residues Glu311 and Cys449.

Belongs to the cytochrome P450 family. Heme is required as a cofactor.

It localises to the endoplasmic reticulum membrane. Its subcellular location is the microsome membrane. Involved in the metabolism of insect hormones and in the breakdown of synthetic insecticides. This is Cytochrome P450 4d2 (Cyp4d2) from Drosophila melanogaster (Fruit fly).